We begin with the raw amino-acid sequence, 275 residues long: Ribosome biogenesis protein RLP7 (275 aa).

The tract at residues 14–45 is disordered; the sequence is KRKNNDRKRLEKQEQARQRQLEQKKKNDQRSK. Residues 20–44 are compositionally biased toward basic and acidic residues; the sequence is RKRLEKQEQARQRQLEQKKKNDQRS.

This sequence belongs to the universal ribosomal protein uL30 family.

It localises to the nucleus. The protein resides in the nucleolus. Functionally, involved in the biogenesis of the 60S ribosomal subunit. May act as a specificity factor that binds precursor rRNAs and tethers the enzymes that carry out the early 5' to 3' exonucleolytic reactions that generate the mature rRNAs. This is Ribosome biogenesis protein RLP7 (RLP7) from Debaryomyces hansenii (strain ATCC 36239 / CBS 767 / BCRC 21394 / JCM 1990 / NBRC 0083 / IGC 2968) (Yeast).